Reading from the N-terminus, the 103-residue chain is Small ribosomal subunit protein uS10 (103 aa).

It belongs to the universal ribosomal protein uS10 family. Part of the 30S ribosomal subunit.

Its function is as follows. Involved in the binding of tRNA to the ribosomes. In Helicobacter hepaticus (strain ATCC 51449 / 3B1), this protein is Small ribosomal subunit protein uS10.